A 235-amino-acid polypeptide reads, in one-letter code: MTGDINKLFMRATRKAMIGWETNLTADEIVQELWVWYLESPYIQKKLGELRPGEAVIYVRKQVHNILSGSAKARDLFQERSHYSSDNVKDALRGESTNRYLVDILPLAMKELGSKNERHAEAIRVRYDDGVVPERGSAAEAMLKRAVKSLTEHVNIIAITAGVERDDNGKVIVKDGPGSKHAIFPDIRKVQGEGHSDPTANIAIMLVEHPGLRDEYLYEPPIPEFLGGRCYAKSA.

This is Gene 53 protein (53) from Mycobacterium phage D29 (Mycobacteriophage D29).